A 1813-amino-acid polypeptide reads, in one-letter code: Nonribosomal peptide synthetase 1 (1813 aa).

The interval Glu89–Arg494 is adenylation. In terms of domain architecture, Carrier 1 spans Glu624 to Asp699. Ser660 is modified (O-(pantetheine 4'-phosphoryl)serine). The interval Asp738–Glu1159 is condensation 1. The region spanning Gln1282 to Leu1358 is the Carrier 2 domain. Ser1319 is subject to O-(pantetheine 4'-phosphoryl)serine. The interval Phe1427–Glu1806 is condensation 2.

Belongs to the NRP synthetase family.

It participates in siderophore biosynthesis. Its function is as follows. Nonribosomal peptide synthetase; part of the gene cluster that mediates the biosynthesis of hydroxamate-containing siderophores that play a critical role in virulence via intracellular iron acquisition during macrophage infection. In Ajellomyces capsulatus (Darling's disease fungus), this protein is Nonribosomal peptide synthetase 1.